The primary structure comprises 594 residues: MSGSFRSNFSIASIHLRLYETIKSQSRIILLFCRGMFKRFAKYKSNLESAMVDVELEARIQIPKPTNIIFEDETVITYYRSTMYPSLIFRRINNGKLNSKETVEKIKYGEVTICLSIEQTYSNMDIKFPIIPANKRTISRKRICENPIVDITKCGDQYTLEIEFDYSNYMHIEKILKEWKNPYWPPVKPMEISSSNLAKKLANNEQWCISPKADGIHVLVYSDGENQFIVHTNGYTEGDTNIKVNRIFEGELMSNGEILYFDCLMWENKNITKLDYIARYKYLENMNKKEIILFNNIYAIKKYLDKKHDFETDGYIITNIKNRKKVYKSKFKNTVDLRYKNGYLLLENEEFSERSPKNVNEQLEEDKIYEFDMEMNLIRERKDKTIANYKMPYDDNPIYKIAHSIGVPTLRYYHNKIKRELLSMLPKTTLLDIGSAKGGDITKWTNLKFEKVYAVDPNLELRQRSKKVVEIRENIEDVYKMFDYESVSLFFVPWNDKFMDVINKAKYFVLICMDKPVTVKEDCFECKIENEKVILKIPDTQTSEYVEENLIKYTDVFKKLKNWKHMKINRTMNTGSAQEIELSRMYSYHFFSKK.

Functionally, the presence of the two linear plasmids, termed pGKL1 and pGKL2, in strains of Kluyveromyces lactis confers the killer phenotype to the host cell, by promoting the secretion of a toxin able to inhibit the growth of sensitive strains. This is an uncharacterized protein from Kluyveromyces lactis (strain ATCC 8585 / CBS 2359 / DSM 70799 / NBRC 1267 / NRRL Y-1140 / WM37) (Yeast).